A 465-amino-acid polypeptide reads, in one-letter code: Mitochondrial distribution and morphology protein 10 (465 aa).

It belongs to the MDM10 family. As to quaternary structure, component of the ER-mitochondria encounter structure (ERMES) or MDM complex, composed of MMM1, MDM10, MDM12 and MDM34. Associates with the mitochondrial outer membrane sorting assembly machinery SAM(core) complex.

The protein localises to the mitochondrion outer membrane. Its function is as follows. Component of the ERMES/MDM complex, which serves as a molecular tether to connect the endoplasmic reticulum and mitochondria. Components of this complex are involved in the control of mitochondrial shape and protein biogenesis and may function in phospholipid exchange. MDM10 is involved in the late assembly steps of the general translocase of the mitochondrial outer membrane (TOM complex). Functions in the TOM40-specific route of the assembly of outer membrane beta-barrel proteins, including the association of TOM40 with the receptor TOM22 and small TOM proteins. Can associate with the SAM(core) complex as well as the MDM12-MMM1 complex, both involved in late steps of the major beta-barrel assembly pathway, that is responsible for biogenesis of all outer membrane beta-barrel proteins. May act as a switch that shuttles between both complexes and channels precursor proteins into the TOM40-specific pathway. Plays a role in mitochondrial morphology and in the inheritance of mitochondria. The protein is Mitochondrial distribution and morphology protein 10 of Eremothecium gossypii (strain ATCC 10895 / CBS 109.51 / FGSC 9923 / NRRL Y-1056) (Yeast).